A 420-amino-acid polypeptide reads, in one-letter code: Gamma-glutamyl phosphate reductase (420 aa).

Belongs to the gamma-glutamyl phosphate reductase family.

The protein resides in the cytoplasm. The enzyme catalyses L-glutamate 5-semialdehyde + phosphate + NADP(+) = L-glutamyl 5-phosphate + NADPH + H(+). Its pathway is amino-acid biosynthesis; L-proline biosynthesis; L-glutamate 5-semialdehyde from L-glutamate: step 2/2. Its function is as follows. Catalyzes the NADPH-dependent reduction of L-glutamate 5-phosphate into L-glutamate 5-semialdehyde and phosphate. The product spontaneously undergoes cyclization to form 1-pyrroline-5-carboxylate. The protein is Gamma-glutamyl phosphate reductase of Streptococcus gordonii (strain Challis / ATCC 35105 / BCRC 15272 / CH1 / DL1 / V288).